We begin with the raw amino-acid sequence, 427 residues long: Diaminobutyrate--2-oxoglutarate transaminase (427 aa).

At Lys-264 the chain carries N6-(pyridoxal phosphate)lysine.

The protein belongs to the class-III pyridoxal-phosphate-dependent aminotransferase family. The cofactor is pyridoxal 5'-phosphate.

It catalyses the reaction L-2,4-diaminobutanoate + 2-oxoglutarate = L-aspartate 4-semialdehyde + L-glutamate. It functions in the pathway amine and polyamine biosynthesis; ectoine biosynthesis; L-ectoine from L-aspartate 4-semialdehyde: step 1/3. Functionally, catalyzes reversively the conversion of L-aspartate beta-semialdehyde (ASA) to L-2,4-diaminobutyrate (DABA) by transamination with L-glutamate. The sequence is that of Diaminobutyrate--2-oxoglutarate transaminase (ectB) from Wolinella succinogenes (strain ATCC 29543 / DSM 1740 / CCUG 13145 / JCM 31913 / LMG 7466 / NCTC 11488 / FDC 602W) (Vibrio succinogenes).